A 209-amino-acid polypeptide reads, in one-letter code: Ribosomal RNA small subunit methyltransferase G (209 aa).

S-adenosyl-L-methionine is bound by residues glycine 77, methionine 82, valine 128–glutamate 129, and arginine 143.

It belongs to the methyltransferase superfamily. RNA methyltransferase RsmG family.

The protein localises to the cytoplasm. The catalysed reaction is guanosine(527) in 16S rRNA + S-adenosyl-L-methionine = N(7)-methylguanosine(527) in 16S rRNA + S-adenosyl-L-homocysteine. Functionally, specifically methylates the N7 position of guanine in position 527 of 16S rRNA. The polypeptide is Ribosomal RNA small subunit methyltransferase G (Chromobacterium violaceum (strain ATCC 12472 / DSM 30191 / JCM 1249 / CCUG 213 / NBRC 12614 / NCIMB 9131 / NCTC 9757 / MK)).